Consider the following 132-residue polypeptide: Small ribosomal subunit protein uS11 (132 aa).

Positions 108–132 are disordered; that stretch reads GRIEDVTPVPHDSCRPKGGRRGRRV.

Belongs to the universal ribosomal protein uS11 family. In terms of assembly, part of the 30S ribosomal subunit.

Its function is as follows. Located on the platform of the 30S subunit. The chain is Small ribosomal subunit protein uS11 from Methanoregula boonei (strain DSM 21154 / JCM 14090 / 6A8).